The following is a 478-amino-acid chain: MSRFSSALQLTDLDDFITPSQECIKPVKIETSKSKTGAKITIQEDGSYVQESSSGIQKLEKVEITLADCLACSGCITSAEGVLISQQSQEELLRVMNANNLAKLNNQRDEIKFVVFTVSQQPILSLARKYNLTPEDTFEHIAGYFKKLGADMVVDTKIADDLALIECRNEFIERYNTNRKLLPMLASSCPGWVCYAEKTHGNFILPYIATTRSPQQIMGVLVKQYLAKQLQTTGDRIYHVTVMPCYDKKLEASREDFFSEVENSRDVDCVITSIEIEQMLNSLDLPSLQLVERCAIDWPWPTVRPSAFVWGHESSGSGGYAEYIFKYAARKLFNVQLDTVAFKPLRNNDMREAVLEQNGQVLMRFAIANGFRNIQNMVQKLKRGKSTYDYVEIMACPSGCLNGGAQIRPEEGRAARELTAELECMYRSLPQSTPENDCVQTMYATFFDSEGDLNKRQSLLHTSYHQIEKINSALNIKW.

[4Fe-4S] cluster contacts are provided by cysteine 23, cysteine 69, cysteine 72, cysteine 75, cysteine 189, cysteine 245, cysteine 396, and cysteine 400.

This sequence belongs to the NARF family.

Functionally, component of the cytosolic iron-sulfur (Fe/S) protein assembly machinery. Required for maturation of extramitochondrial Fe/S proteins. This is Probable cytosolic Fe-S cluster assembly factor AGAP009023 from Anopheles gambiae (African malaria mosquito).